Consider the following 291-residue polypeptide: ATP synthase gamma chain (291 aa).

This sequence belongs to the ATPase gamma chain family. In terms of assembly, F-type ATPases have 2 components, CF(1) - the catalytic core - and CF(0) - the membrane proton channel. CF(1) has five subunits: alpha(3), beta(3), gamma(1), delta(1), epsilon(1). CF(0) has three main subunits: a, b and c.

It is found in the cell inner membrane. In terms of biological role, produces ATP from ADP in the presence of a proton gradient across the membrane. The gamma chain is believed to be important in regulating ATPase activity and the flow of protons through the CF(0) complex. The protein is ATP synthase gamma chain of Nitratidesulfovibrio vulgaris (strain ATCC 29579 / DSM 644 / CCUG 34227 / NCIMB 8303 / VKM B-1760 / Hildenborough) (Desulfovibrio vulgaris).